Reading from the N-terminus, the 1639-residue chain is Merozoite surface protein 1 (1639 aa).

Positions 1 to 19 (MKIIFFLCSFLFFIINTQC) are cleaved as a signal peptide. 2 stretches are compositionally biased toward polar residues: residues 58-67 (SGTAVTTSTP) and 107-119 (NSRR…NSSD). 2 disordered regions span residues 58-78 (SGTA…SGGS) and 94-122 (VASG…DSDA). Residues N116 and N268 are each glycosylated (N-linked (GlcNAc...) asparagine). The segment at 689-764 (KKNIKTEGQS…VPTPPAPVNN (76 aa)) is disordered. 2 stretches are compositionally biased toward polar residues: residues 694–704 (TEGQSDNSEPS) and 711–722 (GQATTKPGQQAG). Low complexity predominate over residues 730-741 (VQAQAQEQKQAQ). N-linked (GlcNAc...) asparagine glycosylation is found at N764, N768, N783, and N844. Residues 893–915 (SMQPLSLTPQDKPEVSANDDTSH) form a disordered region. N-linked (GlcNAc...) asparagine glycans are attached at residues N920, N964, N1058, N1165, and N1174. The interval 1002–1116 (QLSFDLYNKY…EESIQTEDNY (115 aa)) is required for binding to host erythrocyte cell membrane. The span at 1199–1212 (VSESGSDTLEQSQP) shows a compositional bias: polar residues. Residues 1199-1229 (VSESGSDTLEQSQPKKPASTHVGAESNTITT) form a disordered region. N1445 and N1526 each carry an N-linked (GlcNAc...) asparagine glycan. 2 EGF-like domains span residues 1530–1570 (HQCV…VENP) and 1571–1618 (NPTC…IFCS). Intrachain disulfides connect C1532–C1543, C1537–C1553, C1555–C1566, C1574–C1587, C1581–C1601, and C1603–C1617. S1618 is lipidated: GPI-anchor amidated serine. A propeptide spans 1619 to 1639 (SSNFLGISFLLILMLILYSFI) (removed in mature form).

Forms a complex composed of subunits p83, p30, p38, and p42 which remain non-covalently associated; the complex is formed at the merozoite surface prior to egress from host erythrocytes. Forms a complex composed of processed MSP1 subunits, MSP6 subunit p36 and MSP7; the complex is formed at the merozoite surface prior to egress from host erythrocytes. Within the complex, interacts (via subunit p38) with MSP6 subunit p36 and (via subunits p83, p30 and p38) with MSP7 (via subunit p22). Forms a complex composed of MSP1, MSP6, DBLMSP1 and DBLMSP2. Within the complex, interacts (via subunit p38) with DBLMSP1 and DBLMSP2. Forms a complex composed of MSP1, and rhoptry proteins RhopH3, RAP1 and CLAG9/RhopH3. Within the complex, interacts (via subunits p42 and p19) with RhopH3 (via C-terminus). Forms a complex composed of MSP1, MSP6, MSP7, MSP9 and MSP3; within the complex, MSP6 and MSP9 mediate the binding to the host erythrocyte. Interacts (via subunits p19 and p42) with MSP9; the interaction is direct; MSP1 subunits p19 or p42, and MSP9 form a co-ligand complex that interacts with host SLC4A1/Band 3 protein. May interact with PFD6. Interacts with host spectrin. In terms of assembly, interacts with host glycophorin GYPA in a sialic acid-independent manner. As to quaternary structure, interacts with host proinflammatory cytokine S100P; the interaction blocks S100P inflammatory and chemotactic activities. Interacts with host SLC4A1/Band 3 (via 5ABC region) on the host erythrocyte surface in a sialic acid-independent manner. In terms of processing, the p190 precursor is cleaved by SUB1 prior to merozoite egress into 4 subunits p83, p30, p38, and p42 which remain non-covalently associated. SUB1-mediated proteolytic cleavage occurs in an orderly manner; the first cleavage occurs at the p83/p30 site, followed by cleavage at the p30/p38 site, the last cleavage occurs at the p38/p42 site. The order of cleavage is essential for parasite viability. SUB1-mediated processing is essential for merozoite egress. In a second processing step during erythrocyte invasion, p42 is cleaved by SUB2 into p33 and p19; the latter remains attached to the merozoite surface via its GPI-anchor and stays on the surface during the subsequent ring stage.

The protein localises to the cell membrane. It is found in the secreted. The protein resides in the vacuole membrane. Its function is as follows. During the asexual blood stage, involved in merozoite egress from host erythrocytes possibly via its interaction with the host cytoskeleton protein spectrin resulting in the destabilization of the host cytoskeleton and thus leading to erythrocyte cell membrane rupture. Involved in the binding to host erythrocytes and is required for host erythrocyte invasion. By binding to host proinflammatory cytokine S100P may interfere with host immune responses. In terms of biological role, involved in merozoite invasion of host erythrocytes. May play a role in the biogenesis and/or function of the food vacuole during the intraerythrocytic development. This is Merozoite surface protein 1 from Plasmodium falciparum (isolate Wellcome).